The chain runs to 427 residues: Large ribosomal subunit protein uL4 (427 aa).

The residue at position 2 (Ala-2) is an N-acetylalanine. Residue Lys-14 is modified to N6-acetyllysine. Arg-97 carries the post-translational modification Omega-N-methylarginine. Residue Lys-106 is modified to N6-acetyllysine. A Glycyl lysine isopeptide (Lys-Gly) (interchain with G-Cter in SUMO2) cross-link involves residue Lys-239. N6-acetyllysine is present on Lys-259. Thr-266 carries the phosphothreonine modification. 2 positions are modified to phosphoserine: Ser-290 and Ser-295. Residue Arg-300 is modified to Citrulline. Lys-327 participates in a covalent cross-link: Glycyl lysine isopeptide (Lys-Gly) (interchain with G-Cter in SUMO2). Residues Lys-333 and Lys-353 each carry the N6-acetyllysine modification. At Lys-364 the chain carries N6-acetyllysine; alternate. Lys-364 participates in a covalent cross-link: Glycyl lysine isopeptide (Lys-Gly) (interchain with G-Cter in SUMO1); alternate. Ser-365 is modified (phosphoserine). Residues 369 to 427 are disordered; that stretch reads AAVAGKKPVVGKKGKKAAVGVKKQKKPLVGKKAAATKKPAPEKKPAEKKPTTEEKKPAA. Residues 377 to 397 are compositionally biased toward basic residues; it reads VVGKKGKKAAVGVKKQKKPLV. The segment covering 407-427 has biased composition (basic and acidic residues); it reads PAPEKKPAEKKPTTEEKKPAA.

It belongs to the universal ribosomal protein uL4 family. Component of the large ribosomal subunit. May bind IPO9 with low affinity. Interacts with RBM3. In terms of processing, citrullinated by PADI4.

It localises to the cytoplasm. Component of the large ribosomal subunit. The ribosome is a large ribonucleoprotein complex responsible for the synthesis of proteins in the cell. This is Large ribosomal subunit protein uL4 (RPL4) from Pongo abelii (Sumatran orangutan).